The following is a 387-amino-acid chain: MATTKSVLVLIFMILATTSSTFATLGEMVTVLSVDGGGIKGIIPGIILEFLEGQLQKMDNNADARLADYFDVIGGTSTGGLLTAMITTPNENNRPFAAAKDIVPFYFQHGPHIFNSSTGQFFGPKYDGKYLMQVPQEKLGETRVHQALTEVAISSFDIKTNKPVIFTKSNLAKSPELDAKMSDICYSTAAAPTYFPPHYFATNTSNGDKYEFNLVDGAVATVADPALLSVSVATRRAEEDPAFASIRSLNYKQLLLLSLGTGTNSEFDKTHTAQETAKWGALQWMLVIQQMTEAASSYMTDYYLSTVFQDLHSQNNYLRVQENALTGTTTKADDASEANMELLVQVGETLLKKPVSKDSPETYEEALKRFAKLLSDRKKLRANKASY.

The signal sequence occupies residues 1–23 (MATTKSVLVLIFMILATTSSTFA). In terms of domain architecture, PNPLA spans 32–230 (LSVDGGGIKG…TVADPALLSV (199 aa)). Positions 36-41 (GGGIKG) match the GXGXXG motif. The GXSXG motif lies at 75-79 (GTSTG). Catalysis depends on Ser77, which acts as the Nucleophile. Residues Asn115 and Asn203 are each glycosylated (N-linked (GlcNAc...) asparagine). Asp216 functions as the Proton acceptor in the catalytic mechanism. A DGA/G motif is present at residues 216-218 (DGA). Residues 361-385 (ETYEEALKRFAKLLSDRKKLRANKA) adopt a coiled-coil conformation.

This sequence belongs to the patatin family. Tuber.

Its subcellular location is the vacuole. Probable lipolytic acyl hydrolase (LAH), an activity which is thought to be involved in the response of tubers to pathogens. The chain is Patatin-13 from Solanum tuberosum (Potato).